Reading from the N-terminus, the 142-residue chain is UPF0305 protein MK0666 (142 aa).

Belongs to the UPF0305 family.

This Methanopyrus kandleri (strain AV19 / DSM 6324 / JCM 9639 / NBRC 100938) protein is UPF0305 protein MK0666.